A 115-amino-acid chain; its full sequence is Glutaredoxin-like protein C5orf63 homolog (115 aa).

The cysteines at positions 40 and 43 are disulfide-linked.

It belongs to the glutaredoxin family. YDR286C subfamily.

This chain is Glutaredoxin-like protein C5orf63 homolog, found in Mus musculus (Mouse).